Here is a 316-residue protein sequence, read N- to C-terminus: 4-hydroxy-3-methylbut-2-enyl diphosphate reductase (316 aa).

Cysteine 12 contacts [4Fe-4S] cluster. Histidine 41 and histidine 74 together coordinate (2E)-4-hydroxy-3-methylbut-2-enyl diphosphate. Dimethylallyl diphosphate is bound by residues histidine 41 and histidine 74. 2 residues coordinate isopentenyl diphosphate: histidine 41 and histidine 74. Cysteine 96 is a binding site for [4Fe-4S] cluster. Histidine 124 contacts (2E)-4-hydroxy-3-methylbut-2-enyl diphosphate. Histidine 124 is a dimethylallyl diphosphate binding site. Histidine 124 contacts isopentenyl diphosphate. The active-site Proton donor is glutamate 126. Residue threonine 167 coordinates (2E)-4-hydroxy-3-methylbut-2-enyl diphosphate. Cysteine 197 lines the [4Fe-4S] cluster pocket. (2E)-4-hydroxy-3-methylbut-2-enyl diphosphate contacts are provided by serine 225, serine 226, asparagine 227, and serine 269. Dimethylallyl diphosphate contacts are provided by serine 225, serine 226, asparagine 227, and serine 269. Residues serine 225, serine 226, asparagine 227, and serine 269 each coordinate isopentenyl diphosphate.

This sequence belongs to the IspH family. As to quaternary structure, homodimer. [4Fe-4S] cluster serves as cofactor.

The catalysed reaction is isopentenyl diphosphate + 2 oxidized [2Fe-2S]-[ferredoxin] + H2O = (2E)-4-hydroxy-3-methylbut-2-enyl diphosphate + 2 reduced [2Fe-2S]-[ferredoxin] + 2 H(+). The enzyme catalyses dimethylallyl diphosphate + 2 oxidized [2Fe-2S]-[ferredoxin] + H2O = (2E)-4-hydroxy-3-methylbut-2-enyl diphosphate + 2 reduced [2Fe-2S]-[ferredoxin] + 2 H(+). Its pathway is isoprenoid biosynthesis; dimethylallyl diphosphate biosynthesis; dimethylallyl diphosphate from (2E)-4-hydroxy-3-methylbutenyl diphosphate: step 1/1. The protein operates within isoprenoid biosynthesis; isopentenyl diphosphate biosynthesis via DXP pathway; isopentenyl diphosphate from 1-deoxy-D-xylulose 5-phosphate: step 6/6. Its function is as follows. Catalyzes the conversion of 1-hydroxy-2-methyl-2-(E)-butenyl 4-diphosphate (HMBPP) into a mixture of isopentenyl diphosphate (IPP) and dimethylallyl diphosphate (DMAPP). Acts in the terminal step of the DOXP/MEP pathway for isoprenoid precursor biosynthesis. The protein is 4-hydroxy-3-methylbut-2-enyl diphosphate reductase of Salmonella agona (strain SL483).